The following is a 276-amino-acid chain: Pantothenate synthetase (276 aa).

26–33 serves as a coordination point for ATP; it reads MGFLHEGH. His-33 acts as the Proton donor in catalysis. Gln-57 contacts (R)-pantoate. Gln-57 serves as a coordination point for beta-alanine. Residue 142–145 coordinates ATP; it reads GLKD. Gln-148 provides a ligand contact to (R)-pantoate. Residues Ile-171 and 179–182 contribute to the ATP site; that span reads KSSR.

The protein belongs to the pantothenate synthetase family. As to quaternary structure, homodimer.

It localises to the cytoplasm. It carries out the reaction (R)-pantoate + beta-alanine + ATP = (R)-pantothenate + AMP + diphosphate + H(+). It functions in the pathway cofactor biosynthesis; (R)-pantothenate biosynthesis; (R)-pantothenate from (R)-pantoate and beta-alanine: step 1/1. Catalyzes the condensation of pantoate with beta-alanine in an ATP-dependent reaction via a pantoyl-adenylate intermediate. The protein is Pantothenate synthetase of Exiguobacterium sibiricum (strain DSM 17290 / CCUG 55495 / CIP 109462 / JCM 13490 / 255-15).